The sequence spans 274 residues: Imidazole glycerol phosphate synthase subunit HisF (274 aa).

Active-site residues include D11 and D134.

Belongs to the HisA/HisF family. As to quaternary structure, heterodimer of HisH and HisF.

Its subcellular location is the cytoplasm. The enzyme catalyses 5-[(5-phospho-1-deoxy-D-ribulos-1-ylimino)methylamino]-1-(5-phospho-beta-D-ribosyl)imidazole-4-carboxamide + L-glutamine = D-erythro-1-(imidazol-4-yl)glycerol 3-phosphate + 5-amino-1-(5-phospho-beta-D-ribosyl)imidazole-4-carboxamide + L-glutamate + H(+). It functions in the pathway amino-acid biosynthesis; L-histidine biosynthesis; L-histidine from 5-phospho-alpha-D-ribose 1-diphosphate: step 5/9. IGPS catalyzes the conversion of PRFAR and glutamine to IGP, AICAR and glutamate. The HisF subunit catalyzes the cyclization activity that produces IGP and AICAR from PRFAR using the ammonia provided by the HisH subunit. This Methanobrevibacter smithii (strain ATCC 35061 / DSM 861 / OCM 144 / PS) protein is Imidazole glycerol phosphate synthase subunit HisF.